The following is a 256-amino-acid chain: Phosphatidylglycerol--prolipoprotein diacylglyceryl transferase (256 aa).

The next 3 helical transmembrane spans lie at 19-39, 56-76, and 91-111; these read VHWY…LGYW, LIFY…MLFY, and IWEG…AAWL. Arginine 139 contacts a 1,2-diacyl-sn-glycero-3-phospho-(1'-sn-glycerol). Residues 231-251 form a helical membrane-spanning segment; sequence FGWLTMGQVLSIPMLLIGIWL.

Belongs to the Lgt family.

It is found in the cell inner membrane. It catalyses the reaction L-cysteinyl-[prolipoprotein] + a 1,2-diacyl-sn-glycero-3-phospho-(1'-sn-glycerol) = an S-1,2-diacyl-sn-glyceryl-L-cysteinyl-[prolipoprotein] + sn-glycerol 1-phosphate + H(+). The protein operates within protein modification; lipoprotein biosynthesis (diacylglyceryl transfer). Its function is as follows. Catalyzes the transfer of the diacylglyceryl group from phosphatidylglycerol to the sulfhydryl group of the N-terminal cysteine of a prolipoprotein, the first step in the formation of mature lipoproteins. The chain is Phosphatidylglycerol--prolipoprotein diacylglyceryl transferase from Legionella pneumophila subsp. pneumophila (strain Philadelphia 1 / ATCC 33152 / DSM 7513).